Consider the following 766-residue polypeptide: Nucleolar complex protein 2 (766 aa).

Positions 1–12 (MKLATKKIKTLG) are enriched in basic residues. 3 disordered regions span residues 1 to 73 (MKLA…EELE), 100 to 154 (DTDD…DEED), and 674 to 766 (KTGV…LNEW). Over residues 14 to 29 (SKPDLSKKKPAKDAIR) the composition is skewed to basic and acidic residues. Polar residues predominate over residues 33–42 (PQTTSETKVT). A compositionally biased stretch (basic residues) spans 58 to 67 (KTTKKGFKKS). The span at 100 to 115 (DTDDDDDEEGDEEDKE) shows a compositional bias: acidic residues. The residue at position 101 (Thr101) is a Phosphothreonine. Residues 130–140 (EKYHKPSKDLE) are compositionally biased toward basic and acidic residues. Over residues 141–154 (VASDESDFEVDEED) the composition is skewed to acidic residues. 5 positions are modified to phosphoserine: Ser143, Ser146, Ser691, Ser693, and Ser705. Residues 706–720 (DDDDDEDVQEEEEVE) are compositionally biased toward acidic residues. Over residues 757 to 766 (IVKDLDLNEW) the composition is skewed to basic and acidic residues.

This sequence belongs to the NOC2 family.

Its subcellular location is the nucleus. The protein is Nucleolar complex protein 2 of Drosophila melanogaster (Fruit fly).